The sequence spans 449 residues: Glucose-6-phosphate isomerase (449 aa).

At threonine 38 the chain carries Phosphothreonine. Glutamate 290 (proton donor) is an active-site residue. Catalysis depends on residues histidine 311 and lysine 425.

This sequence belongs to the GPI family.

It is found in the cytoplasm. The catalysed reaction is alpha-D-glucose 6-phosphate = beta-D-fructose 6-phosphate. Its pathway is carbohydrate biosynthesis; gluconeogenesis. The protein operates within carbohydrate degradation; glycolysis; D-glyceraldehyde 3-phosphate and glycerone phosphate from D-glucose: step 2/4. Functionally, catalyzes the reversible isomerization of glucose-6-phosphate to fructose-6-phosphate. The polypeptide is Glucose-6-phosphate isomerase (Geobacillus thermodenitrificans (strain NG80-2)).